The primary structure comprises 158 residues: Regulator of sigma D (158 aa).

Belongs to the Rsd/AlgQ family. Interacts with RpoD.

The protein resides in the cytoplasm. Binds RpoD and negatively regulates RpoD-mediated transcription activation by preventing the interaction between the primary sigma factor RpoD with the catalytic core of the RNA polymerase and with promoter DNA. May be involved in replacement of the RNA polymerase sigma subunit from RpoD to RpoS during the transition from exponential growth to the stationary phase. The chain is Regulator of sigma D from Escherichia coli (strain SMS-3-5 / SECEC).